A 202-amino-acid polypeptide reads, in one-letter code: Protein Mbar_A1807 (202 aa).

The region spanning 5–196 (VEGRAAVKLA…EKEPCGEVLE (192 aa)) is the AMMECR1 domain.

The polypeptide is Protein Mbar_A1807 (Methanosarcina barkeri (strain Fusaro / DSM 804)).